Reading from the N-terminus, the 457-residue chain is Ribulose bisphosphate carboxylase-like protein (457 aa).

Residues lysine 199, aspartate 201, and glutamate 202 each contribute to the Mg(2+) site. Lysine 199 carries the post-translational modification N6-carboxylysine. Residues 426–457 (AIAAFGKPAHGQAASPQPSEQASEPDAAGGDS) are disordered.

This sequence belongs to the RuBisCO large chain family. Type IV subfamily. Mg(2+) serves as cofactor.

In terms of biological role, may be involved in sulfur metabolism and oxidative stress response. Does not show RuBisCO activity. The polypeptide is Ribulose bisphosphate carboxylase-like protein (Allochromatium vinosum (strain ATCC 17899 / DSM 180 / NBRC 103801 / NCIMB 10441 / D) (Chromatium vinosum)).